A 1183-amino-acid polypeptide reads, in one-letter code: SRC kinase signaling inhibitor 1 (1183 aa).

Positions 1–44 (MGNAPSQDPERSSPPMLSADDAEYPREYRTLGGGGGGGSGGRRF) are disordered. A phosphoserine mark is found at S13 and S18. Residues 31–41 (LGGGGGGGSGG) are compositionally biased toward gly residues. A Phosphoserine modification is found at S45. The residue at position 52 (T52) is a Phosphothreonine. Phosphoserine occurs at positions 53, 64, 143, 165, 169, 179, and 225. Y241 carries the phosphotyrosine modification. Residues 284–379 (ASRESSPTRR…ERRDVKPDED (96 aa)) form a disordered region. Residues 286–296 (RESSPTRRLNN) show a composition bias toward polar residues. Positions 297 to 306 (LSPAPHLASG) are enriched in low complexity. S298, S307, and S324 each carry phosphoserine. Residues 313–331 (PSGLPSGLQSGSPSRSRLS) show a composition bias toward low complexity. R329 and R336 each carry omega-N-methylarginine. 3 positions are modified to phosphoserine: S343, S362, and S364. The span at 369-379 (LERRDVKPDED) shows a compositional bias: basic and acidic residues. Position 396 is a phosphotyrosine (Y396). The segment at 466–643 (YGFRLPPSSP…ASSTPAGQPT (178 aa)) is disordered. Pro residues predominate over residues 485 to 497 (PGGPPPPHSPYSG). Phosphoserine is present on residues S493, S496, and S500. R501 is modified (omega-N-methylarginine). Phosphoserine is present on residues S503, S513, S515, S517, and S522. A compositionally biased stretch (low complexity) spans 524 to 541 (GGKTRSAGSASTAGAPPS). The segment covering 562–574 (KDTETRERMEAME) has biased composition (basic and acidic residues). Phosphoserine occurs at positions 598 and 621. 2 positions are modified to phosphothreonine: T624 and T637. Residues 634–643 (ASSTPAGQPT) are compositionally biased toward low complexity. The interval 647-697 (RLQMQLHLRGLQNSASDLRGQLQQLRKLQLQNQESVRALLKRTEAELSMRV) is interaction with SNAP25. 2 coiled-coil regions span residues 654–674 (LRGLQNSASDLRGQLQQLRKL) and 726–746 (EELITQQLNDLEKSVEKIQRD). S844, S857, and S866 each carry phosphoserine. Disordered stretches follow at residues 861–907 (EMPP…KAVS) and 949–1032 (DCAS…VTSK). T884 bears the Phosphothreonine mark. Phosphoserine is present on S987. The segment covering 1002–1011 (KSPPPPPPRR) has biased composition (pro residues). Residues S1043 and S1060 each carry the phosphoserine modification. 2 disordered regions span residues 1058 to 1081 (AVSEVARPASTPPIMASAIKDEDD) and 1105 to 1183 (GASR…SISF). A compositionally biased stretch (polar residues) spans 1135-1183 (QAQQQATKPSKEMSGSNETSSPVSEKPSASRTSIPVLTSFGARNSSISF).

Belongs to the SRCIN1 family. In terms of assembly, interacts with the N-terminal coiled-coil region of SNAP25. Interacts with BCAR1/p130Cas and SRC through its C-terminal domain. Interacts with CSK, CTTN, SORBS3/vinexin, SYP and MAPRE3/EB3. Post-translationally, tyrosine-phosphorylated in response to EGF and to cell adhesion to integrin ligands. Expressed in some primary breast carcinomas where its presence is significantly associated with increased tumor size. Not detected in normal breast tissue.

It localises to the cytoplasm. The protein resides in the cytoskeleton. The protein localises to the cell projection. Its subcellular location is the axon. It is found in the dendrite. It localises to the presynapse. The protein resides in the postsynapse. The protein localises to the postsynaptic density. Functionally, acts as a negative regulator of SRC by activating CSK which inhibits SRC activity and downstream signaling, leading to impaired cell spreading and migration. Regulates dendritic spine morphology. Involved in calcium-dependent exocytosis. May play a role in neurotransmitter release or synapse maintenance. This chain is SRC kinase signaling inhibitor 1, found in Homo sapiens (Human).